Here is a 1314-residue protein sequence, read N- to C-terminus: Synergin gamma (1314 aa).

A coiled-coil region spans residues 115 to 155 (MQKQFAEEQQKRFEQQQKLLEEERKRRQFEEQKQKLRLLSS). Positions 178–199 (GFSRDAKMHPTPASHPKKPGPS) are disordered. An EH domain is found at 295–388 (NESLVPDAYK…QFPAAPIPTL (94 aa)). A DFXDF motif 1 motif is present at residues 457 to 461 (DFQDF). A disordered region spans residues 460 to 498 (DFQDASKSGSLDDSFSDFQELPASSKTSNSQHGNSAPSL). Positions 462-496 (QDASKSGSLDDSFSDFQELPASSKTSNSQHGNSAP) are enriched in polar residues. Ser-473 carries the phosphoserine modification. Lys-513 carries the post-translational modification N6-acetyllysine. Residues 518–786 (KGIAADKSSE…ADFHSSKFSS (269 aa)) form an interaction with AP1G1 region. Ser-580 carries the phosphoserine modification. Residues 666–678 (LADDFGEFSLFGE) form an interaction with AP1G1, AP1G2 and GGA1 region. The DFXDF motif 2 motif lies at 690 to 694 (DFADF). Position 720 is a phosphoserine (Ser-720). Lys-744 bears the N6-acetyllysine mark. Ser-752 and Ser-772 each carry phosphoserine. Residues 775-779 (DFADF) carry the DFXDF motif 3 motif. Ser-812, Ser-852, Ser-855, Ser-909, Ser-919, and Ser-935 each carry phosphoserine. Disordered regions lie at residues 972 to 1026 (PQTS…DFGE) and 1073 to 1102 (SLSL…NTLN). A compositionally biased stretch (basic and acidic residues) spans 976 to 990 (EQKEYENRDYKDFTK). Residues 1001–1019 (EATCPSPASSGASQETPNE) are compositionally biased toward polar residues. Phosphoserine is present on residues Ser-1006, Ser-1073, Ser-1075, Ser-1087, and Ser-1098. Position 1100 is a phosphothreonine (Thr-1100).

Self-associates. Interacts with GGA1 (via GAE domain). Interacts with GGA2 and GGA3. Interacts with AP1G1 (via GAE domain), a subunit of adapter protein complex AP-1. Interacts with AP1G2 (via GAE domain) a subunit of adapter protein complex AP-1. Component of the aftiphilin/p200/gamma-synergin complex, at least composed of AFTPH/aftiphilin, HEATR5B/p200a and SYNRG/gamma-synergin, which plays a role in the AP1G1/AP-1-mediated trafficking of transferrin from early to recycling endosomes. Within the complex interacts with AFTPH/aftiphilin and HEATR5B/p200a; the interactions are direct. Interacts (via EH domain) with SCAMP1.

It localises to the cytoplasm. Its subcellular location is the golgi apparatus. The protein resides in the trans-Golgi network membrane. It is found in the perinuclear region. The protein localises to the cytoplasmic vesicle. It localises to the clathrin-coated vesicle. Plays a role in endocytosis and/or membrane trafficking at the trans-Golgi network (TGN). May act by linking the adapter protein complex AP-1 to other proteins. Component of clathrin-coated vesicles. Component of the aftiphilin/p200/gamma-synergin complex, which plays roles in AP1G1/AP-1-mediated protein trafficking including the trafficking of transferrin from early to recycling endosomes, and the membrane trafficking of furin and the lysosomal enzyme cathepsin D between the trans-Golgi network (TGN) and endosomes. The polypeptide is Synergin gamma (Homo sapiens (Human)).